Reading from the N-terminus, the 863-residue chain is Axin-1 (863 aa).

Residues 1–81 (MNVQEQGFPL…PEGSASPTPP (81 aa)) are disordered. The short motif at 20–29 (APRPPVPGEE) is the Tankyrase-binding motif element. Over residues 34–61 (STDSRPVNHSFCSGKGTSIKSETSTATP) the composition is skewed to polar residues. S75 is modified (phosphoserine). A Phosphoserine; by CK1 modification is found at S77. Residues 88-211 (SLHSLLDDQD…LKSDIYLEYT (124 aa)) enclose the RGS domain. Residues 209–338 (EYTRTGSESP…DADTLSLTDS (130 aa)) are interaction with TP53. Disordered stretches follow at residues 215 to 240 (SESP…YLPT), 249 to 268 (CDQD…SRLT), and 315 to 344 (ATSA…DGIP). The residue at position 217 (S217) is a Phosphoserine. Residues 249–258 (CDQDADEDDG) show a composition bias toward acidic residues. Residues 325–339 (SLSSDADTLSLTDSS) show a composition bias toward low complexity. The interval 348 to 432 (IRKQHRREMQ…EDGEMPSGPM (85 aa)) is interaction with GSK3B. The tract at residues 353–411 (RREMQESIQVNGRVPLPHIPRTYRMPKEIRVEPQKFAEELIHRLEAVQRTREAEEKLEE) is interaction with SIAH1. Residues 433–501 (ASHKLPSVPA…SPDSGHVAKT (69 aa)) are interaction with beta-catenin. S468 bears the Phosphoserine; by CK1 mark. T480 is subject to Phosphothreonine; by GSK3-beta. S485 is modified (phosphoserine; by GSK3-beta). A phosphoserine mark is found at S492 and S509. Residues 505 to 758 (GGTASGHGKH…PVLSVVPAVS (254 aa)) form an interaction with RNF111 region. Basic residues predominate over residues 529-542 (HHRHVHHHVHHNSA). 2 disordered regions span residues 529–624 (HHRH…DAEK) and 642–664 (HRKA…SRPL). Over residues 543–554 (RPKEQMEAEVAR) the composition is skewed to basic and acidic residues. Positions 572–790 (PRSYSENAGT…CDSIVVAYYF (219 aa)) are interaction with PPP2CA. Polar residues predominate over residues 575–584 (YSENAGTTLS). The segment at 678–753 (AQLRNSVQPS…RPACAPVLSV (76 aa)) is interaction with HIPK2. The region spanning 781-863 (CDSIVVAYYF…KIIGKVEKVD (83 aa)) is the DIX domain. Glycyl lysine isopeptide (Lys-Gly) (interchain with G-Cter in SUMO) cross-links involve residues K858 and K861.

In terms of assembly, homodimer. Component of the beta-catenin destruction complex, containing at least CTNNB1, an axin and GSK3B, that regulates CTNNB1 protein levels through phosphorylation and ubiquitination. Interacts with GSK3B; the interaction hyperphosphorylates CTNNB1 leading to its ubiquitination and destruction. Interacts with DAXX; the interaction stimulates the interaction of DAXX with TP53, stimulates 'Ser-46' phosphorylation of TP53 and induces cell death on UV irradiation. Also interacts with APC, RNF111, SMAD6 and SMAD7. Interacts (via the C-terminal) with PPP1CA; the interaction dephosphorylates AXIN1 and regulates interaction with GSK3B. Interacts with PPP2CA; the interaction dephosphorylates AXIN1. Interacts with MDFI; the interaction decreases AXIN1-mediated JUN N-terminal kinase (JNK) activation. Interacts with MDFIC; the interaction inhibits beta-cateninin-mediated signaling and AXIN1-mediated JUN N-terminal kinase (JNK) activation. Binds ANKRD6, PIAS1, PIAS2, PIAS4, SUMO1, MAP3K1 and MAP3K4. Component of the AXIN1-HIPK2-TP53 complex. Interacts directly in the complex with TP53 and HIPK2. Interacts with DIXDC1; the interaction prevents interaction with MAP3K1. Interacts with AIDA; the interaction blocks the AXIN1-mediated JNK activation through disrupting AXIN1 homodimerization and Wnt signaling. Interacts with LRP5 (via its phosphorylated PPPSP motifs); the interaction is stimulated by WNT1 and GSK3B and activates beta-catenin signaling. Interacts with CTNNB1 (via the armadillo repeats 2-7). Interacts with MACF1. Found in a complex composed of MACF1, APC, AXIN1, CTNNB1 and GSK3B. Interacts with TNKS. Interacts with DAB2; the interaction is mutually exclusive with the AXIN1:PPP1CA interaction. Interacts with ZBED3 (via PPPSP motif); the interaction is direct, enhanced by protein kinase GSK3B and casein kinase CSNK1E activities and decreases GSK3B-induced beta-catenin serine and threonine phosphorylations. Interacts with WDR26. Interacts with GID8. Interacts with SIAH1 and SIAH2; both probably catalyze AXIN1 ubiquitination and subsequent proteasome-mediated ubiquitin-dependent degradation. Interaction with GSK3B and AXIN1 is competitive. In terms of processing, phosphorylation and dephosphorylation of AXIN1 regulates assembly and function of the beta-catenin complex. Phosphorylated by CK1 and GSK3B. Dephosphorylated by PPP1CA and PPP2CA. Phosphorylation by CK1 enhances binding of GSK3B to AXIN1. Also phosphorylated by CDK2 which regulates interaction with CTNBB1. Post-translationally, ADP-ribosylated by tankyrase TNKS and TNKS2. Poly-ADP-ribosylated protein is recognized by RNF146, followed by ubiquitination and subsequent activation of the Wnt signaling pathway. Ubiquitinated by RNF146 when poly-ADP-ribosylated, leading to its degradation and subsequent activation of the Wnt signaling pathway. Deubiquitinated by USP34, deubiquitinated downstream of beta-catenin stabilization step: deubiquitination is important for nuclear accumulation during Wnt signaling to positively regulate beta-catenin (CTNBB1)-mediated transcription. Sumoylation at Lys-858 and Lys-861 prevents ubiquitination and degradation. Sumoylation is required for AXIN1-mediated JNK activation. Ubiquitination by SIAH1 and SIAH2 induces its proteasomal degradation as part of the activation of the Wnt signaling pathway. In terms of tissue distribution, expressed in embryonic stem cells.

It is found in the cytoplasm. It localises to the nucleus. The protein resides in the cell membrane. Its subcellular location is the membrane. Component of the beta-catenin destruction complex required for regulating CTNNB1 levels through phosphorylation and ubiquitination, and modulating Wnt-signaling. Controls dorsoventral patterning via two opposing effects; down-regulates CTNNB1 to inhibit the Wnt signaling pathway and ventralize embryos, but also dorsalizes embryos by activating a Wnt-independent JNK signaling pathway. In Wnt signaling, probably facilitates the phosphorylation of CTNNB1 and APC by GSK3B. Likely to function as a tumor suppressor. Facilitates the phosphorylation of TP53 by HIPK2 upon ultraviolet irradiation. Enhances TGF-beta signaling by recruiting the RNF111 E3 ubiquitin ligase and promoting the degradation of inhibitory SMAD7. Also a component of the AXIN1-HIPK2-TP53 complex which controls cell growth, apoptosis and development. In Mus musculus (Mouse), this protein is Axin-1 (Axin1).